A 449-amino-acid chain; its full sequence is Putative transporter C83.11 (449 aa).

Helical transmembrane passes span 7 to 27 (LSHILFHEKVGFLLLCLLWYI), 47 to 67 (VTLTFLQFGFVAFFSAVCLLF), 84 to 104 (VLYTTLPLSIFQIGGHVFGSL), 109 to 129 (IPVSTVHTVKALSPLFTVLAY), 136 to 156 (VYSAMTYFSLVPLTFGVTLAC), 164 to 184 (IVGLLYALISTCIFVSQNIFG), 205 to 225 (LNLLLYSSGVAFIVMIPVWLY), 255 to 275 (ILAFTLLSIISPVAYSIASLI), and 278 to 298 (IFVIVVSIIWFQQATNFTQGS). Residues Ser348 and Ser352 each carry the phosphoserine modification. Tyr355 bears the Phosphotyrosine mark. The span at 382 to 415 (NSVYSNEGVTSSVSGNATPASVRQSTQNDFSNSN) shows a compositional bias: polar residues. Residues 382 to 416 (NSVYSNEGVTSSVSGNATPASVRQSTQNDFSNSNI) form a disordered region.

It belongs to the TPT transporter family.

The protein resides in the membrane. The sequence is that of Putative transporter C83.11 from Schizosaccharomyces pombe (strain 972 / ATCC 24843) (Fission yeast).